We begin with the raw amino-acid sequence, 268 residues long: 4-hydroxy-tetrahydrodipicolinate reductase (268 aa).

Residues 8 to 13 and Glu-34 contribute to the NAD(+) site; that span reads GGGGKM. Lys-35 provides a ligand contact to NADP(+). NAD(+)-binding positions include 98–100 and 122–125; these read GST and APNM. The active-site Proton donor/acceptor is His-155. Position 156 (His-156) interacts with (S)-2,3,4,5-tetrahydrodipicolinate. The Proton donor role is filled by Lys-159. Position 165–166 (165–166) interacts with (S)-2,3,4,5-tetrahydrodipicolinate; sequence GT.

The protein belongs to the DapB family.

The protein resides in the cytoplasm. It catalyses the reaction (S)-2,3,4,5-tetrahydrodipicolinate + NAD(+) + H2O = (2S,4S)-4-hydroxy-2,3,4,5-tetrahydrodipicolinate + NADH + H(+). The catalysed reaction is (S)-2,3,4,5-tetrahydrodipicolinate + NADP(+) + H2O = (2S,4S)-4-hydroxy-2,3,4,5-tetrahydrodipicolinate + NADPH + H(+). It functions in the pathway amino-acid biosynthesis; L-lysine biosynthesis via DAP pathway; (S)-tetrahydrodipicolinate from L-aspartate: step 4/4. In terms of biological role, catalyzes the conversion of 4-hydroxy-tetrahydrodipicolinate (HTPA) to tetrahydrodipicolinate. In Syntrophus aciditrophicus (strain SB), this protein is 4-hydroxy-tetrahydrodipicolinate reductase.